The sequence spans 208 residues: Ribosomal RNA small subunit methyltransferase J (208 aa).

Residues 54-55 (RD), 70-71 (ER), and D122 contribute to the S-adenosyl-L-methionine site.

Belongs to the methyltransferase superfamily. RsmJ family.

The protein resides in the cytoplasm. It catalyses the reaction guanosine(1516) in 16S rRNA + S-adenosyl-L-methionine = N(2)-methylguanosine(1516) in 16S rRNA + S-adenosyl-L-homocysteine + H(+). Specifically methylates the guanosine in position 1516 of 16S rRNA. The chain is Ribosomal RNA small subunit methyltransferase J from Agrobacterium fabrum (strain C58 / ATCC 33970) (Agrobacterium tumefaciens (strain C58)).